The primary structure comprises 263 residues: LIM and SH3 domain protein 1 (263 aa).

Methionine 1 is modified (N-acetylmethionine). In terms of domain architecture, LIM zinc-binding spans 3–63 (PNCARCGKIV…NAHYPKQSFT (61 aa)). Lysine 42 is subject to N6-acetyllysine. Nebulin repeat units lie at residues 64–95 (MVAD…KNKG) and 97–131 (GFSV…KSRM). Threonine 68 carries the phosphothreonine modification. Residue lysine 75 is modified to N6-methyllysine. Serine 99 bears the Phosphoserine mark. Threonine 104 is modified (phosphothreonine). Lysine 112 bears the N6-succinyllysine mark. 2 positions are modified to phosphoserine: serine 118 and serine 134. Residues 122–207 (YHEEFEKSRM…QRSAPGGGGK (86 aa)) form a disordered region. Residues 148-162 (DSSSYRRPTEQQQPQ) show a composition bias toward polar residues. The 60-residue stretch at 204-263 (GGGKRYRAVYDYSAADEDEVSFQDGDTIVNVQQIDDGWMYGTVERTGDTGMLPANYVEAI) folds into the SH3 domain.

In terms of assembly, interacts with F-actin. Interacts with ANKRD54. Interacts with KBTBD10. In terms of processing, phosphorylated. As to expression, expressed in a wide range of tissues (but not the heart or skeletal muscle), the expression is specific for certain actin-rich cell types within these tissues. Expression is prominent in the cortical regions of ion-transporting duct cells in the pancreas, in the salivary parotid gland and in certain F-actin-rich cells in the distal tubule/collecting duct. In primary cultures of gastric fibroblasts, expression is mainly within the tips of lamellipodia and at the leading edges of membrane ruffles.

The protein localises to the cytoplasm. Its subcellular location is the cell cortex. It localises to the cytoskeleton. Its function is as follows. Plays an important role in the regulation of dynamic actin-based, cytoskeletal activities. Agonist-dependent changes in LASP1 phosphorylation may also serve to regulate actin-associated ion transport activities, not only in the parietal cell but also in certain other F-actin-rich secretory epithelial cell types. The polypeptide is LIM and SH3 domain protein 1 (Rattus norvegicus (Rat)).